A 460-amino-acid chain; its full sequence is Probable serine/threonine-protein kinase kinase DDB_G0280557 (460 aa).

One can recognise a Protein kinase domain in the interval 102–416 (INLKSITDCG…IDQLLAHKYF (315 aa)). ATP contacts are provided by residues Lys-131 and 154–162 (QRHFQQHPL). The active-site Proton acceptor is the Asp-250.

This sequence belongs to the protein kinase superfamily. CMGC Ser/Thr protein kinase family. MAP kinase subfamily.

The enzyme catalyses L-seryl-[protein] + ATP = O-phospho-L-seryl-[protein] + ADP + H(+). It catalyses the reaction L-threonyl-[protein] + ATP = O-phospho-L-threonyl-[protein] + ADP + H(+). The protein is Probable serine/threonine-protein kinase kinase DDB_G0280557 of Dictyostelium discoideum (Social amoeba).